The following is a 284-amino-acid chain: Phosphatidylglycerol--prolipoprotein diacylglyceryl transferase (284 aa).

7 helical membrane-spanning segments follow: residues 14–34 (IAFS…ACAI), 62–82 (YFLW…ILIY), 106–126 (FVGI…IASY), 136–156 (LLIY…FGRI), 190–210 (PSQL…VMWA), 218–238 (GLLI…AEFY), and 252–272 (LSMG…ILLY). A 1,2-diacyl-sn-glycero-3-phospho-(1'-sn-glycerol) is bound at residue arginine 155.

It belongs to the Lgt family.

It localises to the cell inner membrane. It carries out the reaction L-cysteinyl-[prolipoprotein] + a 1,2-diacyl-sn-glycero-3-phospho-(1'-sn-glycerol) = an S-1,2-diacyl-sn-glyceryl-L-cysteinyl-[prolipoprotein] + sn-glycerol 1-phosphate + H(+). Its pathway is protein modification; lipoprotein biosynthesis (diacylglyceryl transfer). Its function is as follows. Catalyzes the transfer of the diacylglyceryl group from phosphatidylglycerol to the sulfhydryl group of the N-terminal cysteine of a prolipoprotein, the first step in the formation of mature lipoproteins. The polypeptide is Phosphatidylglycerol--prolipoprotein diacylglyceryl transferase (Helicobacter pylori (strain ATCC 700392 / 26695) (Campylobacter pylori)).